A 950-amino-acid polypeptide reads, in one-letter code: Bifunctional glutamine synthetase adenylyltransferase/adenylyl-removing enzyme (950 aa).

The segment at 1 to 440 (MLPLPSELQI…VFDHLIGDDA (440 aa)) is adenylyl removase. The interval 449–950 (HGLYKSLWQD…KWLVAAPSDV (502 aa)) is adenylyl transferase.

Belongs to the GlnE family. It depends on Mg(2+) as a cofactor.

It catalyses the reaction [glutamine synthetase]-O(4)-(5'-adenylyl)-L-tyrosine + phosphate = [glutamine synthetase]-L-tyrosine + ADP. The catalysed reaction is [glutamine synthetase]-L-tyrosine + ATP = [glutamine synthetase]-O(4)-(5'-adenylyl)-L-tyrosine + diphosphate. Its function is as follows. Involved in the regulation of glutamine synthetase GlnA, a key enzyme in the process to assimilate ammonia. When cellular nitrogen levels are high, the C-terminal adenylyl transferase (AT) inactivates GlnA by covalent transfer of an adenylyl group from ATP to specific tyrosine residue of GlnA, thus reducing its activity. Conversely, when nitrogen levels are low, the N-terminal adenylyl removase (AR) activates GlnA by removing the adenylyl group by phosphorolysis, increasing its activity. The regulatory region of GlnE binds the signal transduction protein PII (GlnB) which indicates the nitrogen status of the cell. This is Bifunctional glutamine synthetase adenylyltransferase/adenylyl-removing enzyme from Yersinia enterocolitica serotype O:8 / biotype 1B (strain NCTC 13174 / 8081).